The following is a 125-amino-acid chain: Allatostatin (125 aa).

Residues 1–26 (MKTSAYNVYLGVVAAMLALLFVTINA) form the signal peptide. Positions 27-106 (APMEADDETA…SRLARQWRAD (80 aa)) are excised as a propeptide. The residue at position 109 (Gln109) is a Pyrrolidone carboxylic acid.

The protein belongs to the allatostatin family.

It is found in the secreted. Its function is as follows. Strongly inhibits juvenile hormone biosynthesis in vitro by the corpora allata from fifth-stadium larvae and adult females. This Spodoptera frugiperda (Fall armyworm) protein is Allatostatin.